The sequence spans 323 residues: Phosphatidylethanolamine:ceramide ethanolaminephosphotransferase (323 aa).

The Cytoplasmic segment spans residues 1–26 (MAVPPVEMYSGSFWNRMRKPLPLRTQ). A helical membrane pass occupies residues 27–47 (VIRFTVVFVIVSFILAVALQI). Residues 48 to 73 (THERMPDPKVTKPLPDLGFEVLHKYP) are Extracellular-facing. The chain crosses the membrane as a helical span at residues 74-94 (FLFSVADCCIGFLNILSVFTA). Residues 95–147 (FKLYLLHRHCVGSGEPELPCNIPGVSRFFLSVWLCKENCRIELRNVHTIAWIR) are Cytoplasmic-facing. Residues 148–168 (FITSYALLLLSRSVIMVVTSL) form a helical membrane-spanning segment. The Extracellular portion of the chain corresponds to 169–211 (PNPDDLCQDPPKIENRVKDVILTVLTAGAGSIHCGDLMYSGHT). H210 is an active-site residue. Residues 212-232 (VILTLHLMFHWIYGAMVHWSF) form a helical membrane-spanning segment. A topological domain (cytoplasmic) is located at residue R233. Residues 234 to 254 (PVVTVVAIFGYYCIVASRFHY) traverse the membrane as a helical segment. Active-site residues include H253 and D257. At 255–257 (TDD) the chain is on the extracellular side. A helical membrane pass occupies residues 258 to 278 (VLVAIYLTIATFIAVGHNADG). Residues 279–323 (APWQLQLFIRWLPCCGANSREVTEDGVPVAIVIKNEEMMNFEGKS) are Cytoplasmic-facing.

Belongs to the sphingomyelin synthase family.

It localises to the membrane. In terms of biological role, bidirectional lipid ethanolaminephosphotransferase capable of converting phosphatidylethanolamine (PE) and ceramide to ethanolamine-phosphorylceramide (EPC) and diacylglycerol (DAG) and vice versa. Direction is dependent on the relative concentrations of DAG and ceramide as phosphoethanolamine acceptors. Does not function strictly as a SM synthase. Essential for viability of the pathogenic bloodstream stage of this human protozoan parasite and, consequently, can be considered as potential drug target. In Trypanosoma brucei brucei (strain 927/4 GUTat10.1), this protein is Phosphatidylethanolamine:ceramide ethanolaminephosphotransferase.